The following is a 326-amino-acid chain: GTP cyclohydrolase MptA (326 aa).

Belongs to the GTP cyclohydrolase IV family. Homodimer. Fe(2+) is required as a cofactor.

The catalysed reaction is GTP + H2O = 7,8-dihydroneopterin 2',3'-cyclic phosphate + formate + diphosphate + H(+). It participates in cofactor biosynthesis; 5,6,7,8-tetrahydromethanopterin biosynthesis. Functionally, converts GTP to 7,8-dihydro-D-neopterin 2',3'-cyclic phosphate, the first intermediate in the biosynthesis of coenzyme methanopterin. In Methanoregula boonei (strain DSM 21154 / JCM 14090 / 6A8), this protein is GTP cyclohydrolase MptA.